The primary structure comprises 206 residues: Ribosomal RNA large subunit methyltransferase E (206 aa).

S-adenosyl-L-methionine is bound by residues G55, W57, D75, D91, and D116. K156 functions as the Proton acceptor in the catalytic mechanism.

Belongs to the class I-like SAM-binding methyltransferase superfamily. RNA methyltransferase RlmE family.

The protein resides in the cytoplasm. The catalysed reaction is uridine(2552) in 23S rRNA + S-adenosyl-L-methionine = 2'-O-methyluridine(2552) in 23S rRNA + S-adenosyl-L-homocysteine + H(+). Specifically methylates the uridine in position 2552 of 23S rRNA at the 2'-O position of the ribose in the fully assembled 50S ribosomal subunit. The polypeptide is Ribosomal RNA large subunit methyltransferase E (Blochmanniella floridana).